A 359-amino-acid chain; its full sequence is tRNA N6-adenosine threonylcarbamoyltransferase (359 aa).

Positions 115 and 119 each coordinate Fe cation. Substrate-binding positions include 137–141, Asp170, Gly183, and Asn283; that span reads LVSGG. Asp311 is a binding site for Fe cation. The segment at 328 to 359 is disordered; it reads APDSLDIAPRSRWPLDEKSAPVFGTGRRGAKA.

It belongs to the KAE1 / TsaD family. The cofactor is Fe(2+).

It localises to the cytoplasm. It carries out the reaction L-threonylcarbamoyladenylate + adenosine(37) in tRNA = N(6)-L-threonylcarbamoyladenosine(37) in tRNA + AMP + H(+). In terms of biological role, required for the formation of a threonylcarbamoyl group on adenosine at position 37 (t(6)A37) in tRNAs that read codons beginning with adenine. Is involved in the transfer of the threonylcarbamoyl moiety of threonylcarbamoyl-AMP (TC-AMP) to the N6 group of A37, together with TsaE and TsaB. TsaD likely plays a direct catalytic role in this reaction. This Brucella melitensis biotype 2 (strain ATCC 23457) protein is tRNA N6-adenosine threonylcarbamoyltransferase.